The sequence spans 135 residues: Galectin-1 (135 aa).

Alanine 2 is modified (N-acetylalanine). The region spanning 4–135 (GLVASNLNLK…DFKIKCVAFD (132 aa)) is the Galectin domain. An N6-acetyllysine mark is found at lysine 13 and lysine 29. The residue at position 30 (serine 30) is a Phosphoserine. Residues 45–49 (HFNPR), histidine 53, asparagine 62, and 69–72 (WGTE) contribute to the a beta-D-galactoside site. Lysine 108 carries the post-translational modification N6-acetyllysine; alternate. Residue lysine 108 is modified to N6-succinyllysine; alternate. N6-acetyllysine is present on lysine 128.

Homodimer. Binds LGALS3BP. Interacts with CD2, CD3, CD4, CD6, CD7, CD43, ALCAM and CD45. Interacts with laminin (via poly-N-acetyllactosamine). Interacts with SUSD2.

It localises to the secreted. It is found in the extracellular space. The protein localises to the extracellular matrix. Functionally, lectin that binds beta-galactoside and a wide array of complex carbohydrates. Plays a role in regulating apoptosis, cell proliferation and cell differentiation. Inhibits CD45 protein phosphatase activity and therefore the dephosphorylation of Lyn kinase. Strong inducer of T-cell apoptosis. This is Galectin-1 (LGALS1) from Pongo abelii (Sumatran orangutan).